Reading from the N-terminus, the 694-residue chain is Elongation factor G (694 aa).

A tr-type G domain is found at 9–288; the sequence is DAIRNIGIMA…VIVKWLPSPL (280 aa). Residues 18 to 25, 82 to 86, and 136 to 139 contribute to the GTP site; these read AHIDAGKT, DTPGH, and NKMD.

This sequence belongs to the TRAFAC class translation factor GTPase superfamily. Classic translation factor GTPase family. EF-G/EF-2 subfamily.

It is found in the cytoplasm. Functionally, catalyzes the GTP-dependent ribosomal translocation step during translation elongation. During this step, the ribosome changes from the pre-translocational (PRE) to the post-translocational (POST) state as the newly formed A-site-bound peptidyl-tRNA and P-site-bound deacylated tRNA move to the P and E sites, respectively. Catalyzes the coordinated movement of the two tRNA molecules, the mRNA and conformational changes in the ribosome. The polypeptide is Elongation factor G (Chlamydia trachomatis serovar L2b (strain UCH-1/proctitis)).